Consider the following 729-residue polypeptide: Polyribonucleotide nucleotidyltransferase (729 aa).

Mg(2+) is bound by residues Asp510 and Asp516. In terms of domain architecture, KH spans 576–635 (PRVISVKIPVDKIGEVIGPKGKMINQIQADSGAEITVEDDGTIYIGAADGTSAETARSAI). The region spanning 647–719 (GERYLGTIVK…ARGKISLSPS (73 aa)) is the S1 motif domain.

It belongs to the polyribonucleotide nucleotidyltransferase family. The cofactor is Mg(2+).

It localises to the cytoplasm. It catalyses the reaction RNA(n+1) + phosphate = RNA(n) + a ribonucleoside 5'-diphosphate. In terms of biological role, involved in mRNA degradation. Catalyzes the phosphorolysis of single-stranded polyribonucleotides processively in the 3'- to 5'-direction. The chain is Polyribonucleotide nucleotidyltransferase from Frankia alni (strain DSM 45986 / CECT 9034 / ACN14a).